The sequence spans 857 residues: DNA mismatch repair protein MutS (857 aa).

Residue 608-615 coordinates ATP; it reads GPNMSGKS.

It belongs to the DNA mismatch repair MutS family.

Functionally, this protein is involved in the repair of mismatches in DNA. It is possible that it carries out the mismatch recognition step. This protein has a weak ATPase activity. The sequence is that of DNA mismatch repair protein MutS from Lactobacillus johnsonii (strain CNCM I-12250 / La1 / NCC 533).